The following is a 367-amino-acid chain: 3-dehydroquinate synthase (367 aa).

NAD(+) contacts are provided by residues 69–74 (DGEAFK), 103–107 (GVIGD), 127–128 (TT), K140, and K149. 3 residues coordinate Zn(2+): E182, H245, and H262.

The protein belongs to the sugar phosphate cyclases superfamily. Dehydroquinate synthase family. Requires NAD(+) as cofactor. The cofactor is Co(2+). Zn(2+) serves as cofactor.

The protein localises to the cytoplasm. It carries out the reaction 7-phospho-2-dehydro-3-deoxy-D-arabino-heptonate = 3-dehydroquinate + phosphate. The protein operates within metabolic intermediate biosynthesis; chorismate biosynthesis; chorismate from D-erythrose 4-phosphate and phosphoenolpyruvate: step 2/7. In terms of biological role, catalyzes the conversion of 3-deoxy-D-arabino-heptulosonate 7-phosphate (DAHP) to dehydroquinate (DHQ). This chain is 3-dehydroquinate synthase, found in Pseudomonas syringae pv. tomato (strain ATCC BAA-871 / DC3000).